The primary structure comprises 238 residues: MSNVNMDFEQAGELKIGQVGIATLRIRTLNVPRLIQEMSDRVTRAPKLFRRTAVILDFGELPHPPDLATAKALVEGLRAANVLPVAIAYGTNEIDLLSQQLGLPLLSKFRAHYERQEVAAPPPQSTPPISTGRIQHTTVRSGQQLYAEHCDLTILNTVGAGAEVIADGNIHIYGTLRGRAMAGARGNAEMRIFCRDFQAELIAIAGRYKVLDDIPTELRGKAVQVWLEQNQIKIAALD.

This sequence belongs to the MinC family. In terms of assembly, interacts with MinD and FtsZ.

Functionally, cell division inhibitor that blocks the formation of polar Z ring septums. Rapidly oscillates between the poles of the cell to destabilize FtsZ filaments that have formed before they mature into polar Z rings. Prevents FtsZ polymerization. This is Probable septum site-determining protein MinC from Xylella fastidiosa (strain M23).